An 802-amino-acid chain; its full sequence is Oligophrenin-1 (802 aa).

Residues 265 to 368 enclose the PH domain; it reads QPTIEGYLYT…WMEAMDGKEP (104 aa). In terms of domain architecture, Rho-GAP spans 380 to 564; sequence MELNEVGFKF…ILIEHFGKIY (185 aa). Disordered regions lie at residues 569–589, 607–770, and 783–802; these read EESA…HKPI, LDES…NAGE, and FETA…GDES. A compositionally biased stretch (polar residues) spans 616-627; sequence HQTPNGTITSSI. A compositionally biased stretch (basic and acidic residues) spans 716–732; it reads HHKEGDADSFSKVRPPG.

As to quaternary structure, interacts with HOMER1. Interacts with AMPA receptor complexes. Interacts with SH3GL2 (endophilin-A1). Interacts (via C-terminus) with NR1D1.

The protein localises to the postsynapse. It is found in the presynapse. Its subcellular location is the cell projection. The protein resides in the axon. It localises to the dendritic spine. The protein localises to the dendrite. It is found in the cytoplasm. Stimulates GTP hydrolysis of members of the Rho family. Its action on RHOA activity and signaling is implicated in growth and stabilization of dendritic spines, and therefore in synaptic function. Critical for the stabilization of AMPA receptors at postsynaptic sites. Critical for the regulation of synaptic vesicle endocytosis at pre-synaptic terminals. Required for the localization of NR1D1 to dendrites, can suppress its repressor activity and protect it from proteasomal degradation. The chain is Oligophrenin-1 (OPHN1) from Pan troglodytes (Chimpanzee).